The sequence spans 118 residues: Small ribosomal subunit protein uS13 (118 aa).

The interval 94–118 (GLPVRGQRTKTNARTRKGPRKPIKK) is disordered.

The protein belongs to the universal ribosomal protein uS13 family. Part of the 30S ribosomal subunit. Forms a loose heterodimer with protein S19. Forms two bridges to the 50S subunit in the 70S ribosome.

Its function is as follows. Located at the top of the head of the 30S subunit, it contacts several helices of the 16S rRNA. In the 70S ribosome it contacts the 23S rRNA (bridge B1a) and protein L5 of the 50S subunit (bridge B1b), connecting the 2 subunits; these bridges are implicated in subunit movement. Contacts the tRNAs in the A and P-sites. The polypeptide is Small ribosomal subunit protein uS13 (Salmonella paratyphi A (strain ATCC 9150 / SARB42)).